The sequence spans 422 residues: UDP-N-acetylglucosamine 1-carboxyvinyltransferase (422 aa).

Phosphoenolpyruvate is bound at residue 22-23 (KN). Residue Arg94 participates in UDP-N-acetyl-alpha-D-glucosamine binding. The Proton donor role is filled by Cys118. A 2-(S-cysteinyl)pyruvic acid O-phosphothioketal modification is found at Cys118. UDP-N-acetyl-alpha-D-glucosamine is bound by residues 123–127 (RPVDL), Asp309, and Ile331.

Belongs to the EPSP synthase family. MurA subfamily.

The protein resides in the cytoplasm. It catalyses the reaction phosphoenolpyruvate + UDP-N-acetyl-alpha-D-glucosamine = UDP-N-acetyl-3-O-(1-carboxyvinyl)-alpha-D-glucosamine + phosphate. It participates in cell wall biogenesis; peptidoglycan biosynthesis. In terms of biological role, cell wall formation. Adds enolpyruvyl to UDP-N-acetylglucosamine. The polypeptide is UDP-N-acetylglucosamine 1-carboxyvinyltransferase (Cereibacter sphaeroides (strain ATCC 17023 / DSM 158 / JCM 6121 / CCUG 31486 / LMG 2827 / NBRC 12203 / NCIMB 8253 / ATH 2.4.1.) (Rhodobacter sphaeroides)).